A 776-amino-acid chain; its full sequence is Endonuclease MutS2 (776 aa).

Residue 330–337 (GPNTGGKT) participates in ATP binding. The Smr domain occupies 701–776 (LDLRGMRYEE…GSGATIAILK (76 aa)).

It belongs to the DNA mismatch repair MutS family. MutS2 subfamily. Homodimer. Binds to stalled ribosomes, contacting rRNA.

Functionally, endonuclease that is involved in the suppression of homologous recombination and thus may have a key role in the control of bacterial genetic diversity. Its function is as follows. Acts as a ribosome collision sensor, splitting the ribosome into its 2 subunits. Detects stalled/collided 70S ribosomes which it binds and splits by an ATP-hydrolysis driven conformational change. Acts upstream of the ribosome quality control system (RQC), a ribosome-associated complex that mediates the extraction of incompletely synthesized nascent chains from stalled ribosomes and their subsequent degradation. Probably generates substrates for RQC. The protein is Endonuclease MutS2 of Lactococcus lactis subsp. cremoris (strain MG1363).